The primary structure comprises 231 residues: 7-cyano-7-deazaguanine synthase (231 aa).

8–18 (FSGGQDSTTCL) is an ATP binding site. 4 residues coordinate Zn(2+): C188, C197, C200, and C203.

Belongs to the QueC family. It depends on Zn(2+) as a cofactor.

It carries out the reaction 7-carboxy-7-deazaguanine + NH4(+) + ATP = 7-cyano-7-deazaguanine + ADP + phosphate + H2O + H(+). Its pathway is purine metabolism; 7-cyano-7-deazaguanine biosynthesis. Its function is as follows. Catalyzes the ATP-dependent conversion of 7-carboxy-7-deazaguanine (CDG) to 7-cyano-7-deazaguanine (preQ(0)). The sequence is that of 7-cyano-7-deazaguanine synthase from Citrobacter koseri (strain ATCC BAA-895 / CDC 4225-83 / SGSC4696).